We begin with the raw amino-acid sequence, 1744 residues long: Tanabin (1744 aa).

Residues 1–12 (MEGYLASVSLGE) are head. The coil 1A stretch occupies residues 8–48 (VSLGEESTQMWSLNKRLEAYLSRVKALEEENELLRKEIHSL). One can recognise an IF rod domain in the interval 13–320 (ESTQMWSLNK…SLLEAESTRI (308 aa)). The interval 49–60 (RSSKSERCWKKK) is linker 1. The coil 1B stretch occupies residues 61-156 (HHEEMMKLRD…RDHEEEKALM (96 aa)). The linker 12 stretch occupies residues 157 to 179 (EEEIASFSQRLENFRVAPVAFKP). The coil 2A stretch occupies residues 180-193 (VEVDDYARKLSEIW). The segment at 194–199 (QGAVEE) is linker 2. The tract at residues 200-314 (YKSEVSVLEA…EVATYRSLLE (115 aa)) is coil 2B. A tail region spans residues 315 to 1744 (AESTRIYTDY…KKALRWKRMF (1430 aa)). 2 stretches are compositionally biased toward basic and acidic residues: residues 341–371 (RRRQ…KNEL) and 785–815 (HSHH…DKSS). Disordered regions lie at residues 341-372 (RRRQ…NELQ), 785-816 (HSHH…KSSE), 976-996 (EENQ…DIEE), 1032-1093 (SMED…QQED), 1340-1470 (DSDL…FGDV), 1485-1506 (SGLA…SMEN), and 1560-1722 (AREK…LNGH). Over residues 980 to 990 (LSENEGNQNFG) the composition is skewed to polar residues. The span at 1034–1056 (EDEEEQNNPETEDNIGLEQESDQ) shows a compositional bias: acidic residues. Residues 1074-1086 (VVFKPEDMSDKSE) are compositionally biased toward basic and acidic residues. Positions 1340-1351 (DSDLESTEEQVQ) are enriched in acidic residues. Over residues 1352-1367 (ETERIPFKPEDSKMEN) the composition is skewed to basic and acidic residues. Positions 1368-1377 (ENSESEESVD) are enriched in acidic residues. Positions 1386–1398 (HKSEEFEISKDYQ) are enriched in basic and acidic residues. Over residues 1412–1421 (LEDEFEDLTE) the composition is skewed to acidic residues. Over residues 1423 to 1432 (PDVHEEHQNN) the composition is skewed to basic and acidic residues. Positions 1433-1442 (DDSGASTFIT) are enriched in polar residues. Over residues 1445–1460 (DEDKEREVRESVSKDE) the composition is skewed to basic and acidic residues. A compositionally biased stretch (acidic residues) spans 1496-1505 (DNEESEDSME). Composition is skewed to polar residues over residues 1576–1586 (EFTNENQSASP), 1597–1621 (EDSV…TSIS), and 1629–1639 (SNISTTEQSST). The span at 1680–1691 (RSEDEELDDEGS) shows a compositional bias: acidic residues. A compositionally biased stretch (basic and acidic residues) spans 1698 to 1709 (NDEKANGEHKDV).

Belongs to the intermediate filament family. In terms of tissue distribution, growth cones of embryonic vertebrate neurons.

This chain is Tanabin, found in Xenopus laevis (African clawed frog).